A 201-amino-acid polypeptide reads, in one-letter code: ATP synthase subunit delta, chloroplastic (201 aa).

This sequence belongs to the ATPase delta chain family. In terms of assembly, F-type ATPases have 2 components, F(1) - the catalytic core - and F(0) - the membrane proton channel. F(1) has five subunits: alpha(3), beta(3), gamma(1), delta(1), epsilon(1). CF(0) has four main subunits: a(1), b(1), b'(1) and c(10-14). The alpha and beta chains form an alternating ring which encloses part of the gamma chain. F(1) is attached to F(0) by a central stalk formed by the gamma and epsilon chains, while a peripheral stalk is formed by the delta, b and b' chains.

The protein resides in the plastid. Its subcellular location is the chloroplast thylakoid membrane. Its function is as follows. F(1)F(0) ATP synthase produces ATP from ADP in the presence of a proton or sodium gradient. F-type ATPases consist of two structural domains, F(1) containing the extramembraneous catalytic core and F(0) containing the membrane proton channel, linked together by a central stalk and a peripheral stalk. During catalysis, ATP synthesis in the catalytic domain of F(1) is coupled via a rotary mechanism of the central stalk subunits to proton translocation. In terms of biological role, this protein is part of the stalk that links CF(0) to CF(1). It either transmits conformational changes from CF(0) to CF(1) or is implicated in proton conduction. The sequence is that of ATP synthase subunit delta, chloroplastic from Vaucheria litorea (Yellow-green alga).